The following is a 452-amino-acid chain: Membrane-bound lytic murein transglycosylase D (452 aa).

An N-terminal signal peptide occupies residues 1 to 15 (MKAKAILLASVLLVG). Cys16 carries N-palmitoyl cysteine lipidation. A lipid anchor (S-diacylglycerol cysteine) is attached at Cys16. Positions 113 to 198 (NMPMELVLLP…LLTVAAYNSG (86 aa)) are slt-type domain. Glu125 is a catalytic residue. 2 consecutive LysM domains span residues 341 to 384 (RVYT…SLTI) and 400 to 448 (ITYR…KNNN).

The protein belongs to the transglycosylase Slt family.

The protein resides in the cell membrane. It carries out the reaction Exolytic cleavage of the (1-&gt;4)-beta-glycosidic linkage between N-acetylmuramic acid (MurNAc) and N-acetylglucosamine (GlcNAc) residues in peptidoglycan, from either the reducing or the non-reducing ends of the peptidoglycan chains, with concomitant formation of a 1,6-anhydrobond in the MurNAc residue.. Murein-degrading enzyme. May play a role in recycling of muropeptides during cell elongation and/or cell division. The polypeptide is Membrane-bound lytic murein transglycosylase D (mltD) (Escherichia coli O6:H1 (strain CFT073 / ATCC 700928 / UPEC)).